We begin with the raw amino-acid sequence, 607 residues long: Dolichyl-diphosphooligosaccharide--protein glycosyltransferase subunit 1 (607 aa).

The N-terminal stretch at 1 to 23 (MEAPAARLFLLLLLGTWAPAPGS) is a signal peptide. The Lumenal segment spans residues 24–434 (ASSEAPPLIN…VVHYTFNKVL (411 aa)). Position 187 is an N6-acetyllysine (Lys-187). Asn-299 carries N-linked (GlcNAc...) asparagine glycosylation. The chain crosses the membrane as a helical span at residues 435–455 (MLQEPLLVVAAFYILFFTVII). At 456-607 (YVRLDFSITK…TKIDHILDAL (152 aa)) the chain is on the cytoplasmic side. Lys-538 is modified (N6-acetyllysine; alternate). A Glycyl lysine isopeptide (Lys-Gly) (interchain with G-Cter in SUMO2); alternate cross-link involves residue Lys-538.

It belongs to the OST1 family. Component of the oligosaccharyltransferase (OST) complex. OST exists in two different complex forms which contain common core subunits RPN1, RPN2, OST48, OST4, DAD1 and TMEM258, either STT3A or STT3B as catalytic subunits, and form-specific accessory subunits. STT3A complex assembly occurs through the formation of 3 subcomplexes. Subcomplex 1 contains RPN1 and TMEM258, subcomplex 2 contains the STT3A-specific subunits STT3A, DC2/OSTC, and KCP2 as well as the core subunit OST4, and subcomplex 3 contains RPN2, DAD1, and OST48. The STT3A complex can form stable complexes with the Sec61 complex or with both the Sec61 and TRAP complexes. Interacts with TMEM35A/NACHO. Post-translationally, ubiquitinated by the ECS(ASB11) complex. Ufmylated by UFL1 in response to endoplasmic reticulum stress, promoting reticulophagy of endoplasmic reticulum sheets.

The protein resides in the endoplasmic reticulum membrane. Its pathway is protein modification; protein glycosylation. In terms of biological role, subunit of the oligosaccharyl transferase (OST) complex that catalyzes the initial transfer of a defined glycan (Glc(3)Man(9)GlcNAc(2) in eukaryotes) from the lipid carrier dolichol-pyrophosphate to an asparagine residue within an Asn-X-Ser/Thr consensus motif in nascent polypeptide chains, the first step in protein N-glycosylation. N-glycosylation occurs cotranslationally and the complex associates with the Sec61 complex at the channel-forming translocon complex that mediates protein translocation across the endoplasmic reticulum (ER). All subunits are required for a maximal enzyme activity. In Pongo abelii (Sumatran orangutan), this protein is Dolichyl-diphosphooligosaccharide--protein glycosyltransferase subunit 1.